Reading from the N-terminus, the 60-residue chain is MKSDIRVCEAWRSHHDGPVYTLSETCPECGGDAVNSAPAPFDPADPHGKYRRALKERRRL.

The interval 37–60 (APAPFDPADPHGKYRRALKERRRL) is disordered. Basic residues predominate over residues 49-60 (KYRRALKERRRL).

This sequence belongs to the NOP10 family.

Its function is as follows. Involved in ribosome biogenesis; more specifically in 18S rRNA pseudouridylation and in cleavage of pre-rRNA. This chain is Ribosome biogenesis protein Nop10, found in Halobacterium salinarum (strain ATCC 29341 / DSM 671 / R1).